We begin with the raw amino-acid sequence, 316 residues long: BTB/POZ domain-containing adapter for CUL3-mediated RhoA degradation protein 2 (316 aa).

A BTB domain is found at 28–96 (KYVQLNVGGS…LRDDTITLPQ (69 aa)). The segment covering 268 to 279 (EATSRSRSQASP) has biased composition (polar residues). The disordered stretch occupies residues 268–288 (EATSRSRSQASPSEDEDTFEL). A Phosphoserine modification is found at Ser-278. Position 280 is a phosphoserine; by CK2 (Ser-280).

It belongs to the BACURD family. As to quaternary structure, component of the BCR(TNFAIP1) E3 ubiquitin ligase complex, at least composed of CUL3, TNFAIP1/BACURD2 and RBX1. Interacts with RHOA; with a preference for RhoA-GDP. Interacts with RHOB. Interacts with PCNA. Interacts with CSNK2B. Post-translationally, phosphorylation at Ser-280 by CK2 facilitates the nucleus localization and increases interaction with PCNA.

Its subcellular location is the cytoplasm. It localises to the nucleus. The protein resides in the endosome. Its pathway is protein modification; protein ubiquitination. In terms of biological role, substrate-specific adapter of a BCR (BTB-CUL3-RBX1) E3 ubiquitin-protein ligase complex involved in regulation of cytoskeleton structure. The BCR(TNFAIP1) E3 ubiquitin ligase complex mediates the ubiquitination of RHOA, leading to its degradation by the proteasome, thereby regulating the actin cytoskeleton and cell migration. Its interaction with RHOB may regulate apoptosis. May enhance the PCNA-dependent DNA polymerase delta activity. This Mus musculus (Mouse) protein is BTB/POZ domain-containing adapter for CUL3-mediated RhoA degradation protein 2 (Tnfaip1).